A 306-amino-acid polypeptide reads, in one-letter code: Protein-methionine-sulfoxide reductase catalytic subunit MsrP (306 aa).

A signal peptide (tat-type signal) is located at residues 1 to 44 (MLIRHAPDLTDNDVTGHGLYLRRRDFIGGAAGLGLMAAAGSASA). Mo-molybdopterin-binding positions include asparagine 69, 72–73 (YE), cysteine 127, threonine 162, asparagine 210, arginine 215, and 226–228 (GIK).

Belongs to the MsrP family. Heterodimer of a catalytic subunit (MsrP) and a heme-binding subunit (MsrQ). The cofactor is Mo-molybdopterin. In terms of processing, predicted to be exported by the Tat system. The position of the signal peptide cleavage has not been experimentally proven.

Its subcellular location is the periplasm. The catalysed reaction is L-methionyl-[protein] + a quinone + H2O = L-methionyl-(S)-S-oxide-[protein] + a quinol. It catalyses the reaction L-methionyl-[protein] + a quinone + H2O = L-methionyl-(R)-S-oxide-[protein] + a quinol. Part of the MsrPQ system that repairs oxidized periplasmic proteins containing methionine sulfoxide residues (Met-O), using respiratory chain electrons. Thus protects these proteins from oxidative-stress damage caused by reactive species of oxygen and chlorine generated by the host defense mechanisms. MsrPQ is essential for the maintenance of envelope integrity under bleach stress, rescuing a wide series of structurally unrelated periplasmic proteins from methionine oxidation. The catalytic subunit MsrP is non-stereospecific, being able to reduce both (R-) and (S-) diastereoisomers of methionine sulfoxide. The sequence is that of Protein-methionine-sulfoxide reductase catalytic subunit MsrP from Caulobacter sp. (strain K31).